A 359-amino-acid polypeptide reads, in one-letter code: Transcription factor bHLH130 (359 aa).

Ser-60 is subject to Phosphoserine. The segment at Glu-161–Ser-186 is disordered. The span at Pro-167–Pro-184 shows a compositional bias: polar residues. The bHLH domain occupies Cys-285–Leu-335.

As to quaternary structure, homodimer.

Its subcellular location is the nucleus. The sequence is that of Transcription factor bHLH130 (BHLH130) from Arabidopsis thaliana (Mouse-ear cress).